We begin with the raw amino-acid sequence, 345 residues long: MPARALLPRRMGHRTLASTPALWASIPCPRSELRLDLVLPSGQSFRWREQSPAHWSGVLADQVWTLTQTEEQLHCTVYRGDKSQASRPTPDELEAVRKYFQLDVTLAQLYHHWGSVDSHFQEVAQKFQGVRLLRQDPIECLFSFICSSNNNIARITGMVERLCQAFGPRLIQLDDVTYHGFPSLQALAGPEVEAHLRKLGLGYRARYVSASARAILEEQGGLAWLQQLRESSYEEAHKALCILPGVGTKVADCICLMALDKPQAVPVDVHMWHIAQRDYSWHPTTSQAKGPSPQTNKELGNFFRSLWGPYAGWAQAVLFSADLRQSRHAQEPPAKRRKGSKGPEG.

Residues asparagine 149, arginine 154, and arginine 204 each coordinate DNA. Lysine 249 functions as the Schiff-base intermediate with DNA in the catalytic mechanism. Proline 266 and aspartate 268 together coordinate 8-oxoguanine. The DNA site is built by histidine 270 and glutamine 287. The 8-oxoguanine site is built by glutamine 315 and phenylalanine 319. The span at 324-334 (RQSRHAQEPPA) shows a compositional bias: basic and acidic residues. Residues 324–345 (RQSRHAQEPPAKRRKGSKGPEG) are disordered. The segment covering 335–345 (KRRKGSKGPEG) has biased composition (basic residues).

This sequence belongs to the type-1 OGG1 family. Ubiquitous.

The protein localises to the nucleus. It is found in the nucleoplasm. The protein resides in the nucleus speckle. It localises to the nucleus matrix. Its subcellular location is the mitochondrion. It carries out the reaction 2'-deoxyribonucleotide-(2'-deoxyribose 5'-phosphate)-2'-deoxyribonucleotide-DNA = a 3'-end 2'-deoxyribonucleotide-(2,3-dehydro-2,3-deoxyribose 5'-phosphate)-DNA + a 5'-end 5'-phospho-2'-deoxyribonucleoside-DNA + H(+). Functionally, DNA repair enzyme that incises DNA at 8-oxoG residues. Excises 7,8-dihydro-8-oxoguanine and 2,6-diamino-4-hydroxy-5-N-methylformamidopyrimidine (FAPY) from damaged DNA. Has a beta-lyase activity that nicks DNA 3' to the lesion. This Homo sapiens (Human) protein is N-glycosylase/DNA lyase (OGG1).